A 61-amino-acid polypeptide reads, in one-letter code: Defensin BmKDfsin1 (61 aa).

The first 25 residues, 1–25 (MKTIVLLFVLVLVFALLVKMGMVEA), serve as a signal peptide directing secretion. Cystine bridges form between cysteine 29/cysteine 50, cysteine 36/cysteine 58, and cysteine 40/cysteine 60.

Belongs to the invertebrate defensin family. Type 2 subfamily. Highly expressed in non-venom gland (hemolymph) and moderately expressed in venom gland.

The protein localises to the secreted. Antibacterial peptide active against Gram-positive bacteria, but not on Gram-negative bacteria. Also has weak blocking activity on Kv1.1/KCNA1, Kv1.2/KCNA2, Kv1.3/KCNA3, KCa3.1/KCNN4/IK, KCa2.3/KCNN3/SK3 and Kv11.1/KCNH2/ERG1 channels (tested at 1 uM). It inhibits potassium channel current by interacting with the pore region. The sequence is that of Defensin BmKDfsin1 from Olivierus martensii (Manchurian scorpion).